The primary structure comprises 235 residues: Deoxyribose-phosphate aldolase (235 aa).

Residue Asp107 is the Proton donor/acceptor of the active site. Catalysis depends on Lys167, which acts as the Schiff-base intermediate with acetaldehyde. Lys197 functions as the Proton donor/acceptor in the catalytic mechanism.

This sequence belongs to the DeoC/FbaB aldolase family. DeoC type 1 subfamily. Homotetramer.

It localises to the cytoplasm. The catalysed reaction is 2-deoxy-D-ribose 5-phosphate = D-glyceraldehyde 3-phosphate + acetaldehyde. The protein operates within carbohydrate degradation; 2-deoxy-D-ribose 1-phosphate degradation; D-glyceraldehyde 3-phosphate and acetaldehyde from 2-deoxy-alpha-D-ribose 1-phosphate: step 2/2. Catalyzes a reversible aldol reaction between acetaldehyde and D-glyceraldehyde 3-phosphate to generate 2-deoxy-D-ribose 5-phosphate. The sequence is that of Deoxyribose-phosphate aldolase from Aeropyrum pernix (strain ATCC 700893 / DSM 11879 / JCM 9820 / NBRC 100138 / K1).